We begin with the raw amino-acid sequence, 318 residues long: uncharacterized protein (318 aa).

The stretch at leucine 67 to glutamate 157 forms a coiled coil. A disordered region spans residues glutamate 172–leucine 318. 2 stretches are compositionally biased toward basic and acidic residues: residues asparagine 175–lysine 193 and lysine 219–serine 236. A compositionally biased stretch (polar residues) spans valine 237 to threonine 248. 2 stretches are compositionally biased toward basic and acidic residues: residues serine 249–alanine 274 and serine 300–glycine 310.

This is an uncharacterized protein from Staphylococcus aureus (strain MW2).